The following is a 355-amino-acid chain: Apyrase apy-1 (355 aa).

Residues 1–6 (MTQESN) lie on the Cytoplasmic side of the membrane. A helical; Signal-anchor for type II membrane protein membrane pass occupies residues 7–29 (SNFFNFLLFGFVTAIAFYSGTQF). N-linked (GlcNAc...) asparagine glycosylation is present at asparagine 30. Topologically, residues 30–355 (NKSSEQEEHI…PYKYEGIAFA (326 aa)) are lumenal. The Ca(2+) site is built by serine 119, glutamate 166, and glutamate 235. Asparagine 291 is a glycosylation site (N-linked (GlcNAc...) asparagine). Residue glutamate 350 coordinates Ca(2+).

The protein belongs to the apyrase family. Requires Ca(2+) as cofactor.

The protein resides in the endomembrane system. It carries out the reaction a ribonucleoside 5'-diphosphate + H2O = a ribonucleoside 5'-phosphate + phosphate + H(+). In terms of biological role, hydrolyzes UDP and to a lesser extent GDP. By preventing the accumulation of NDP, may promote the reglucosylation of incompletely folded glycoproteins in the endoplasmic reticulum following the unfolded protein response. This chain is Apyrase apy-1, found in Caenorhabditis elegans.